A 120-amino-acid chain; its full sequence is Large ribosomal subunit protein uL18 (120 aa).

This sequence belongs to the universal ribosomal protein uL18 family. Part of the 50S ribosomal subunit; part of the 5S rRNA/L5/L18/L25 subcomplex. Contacts the 5S and 23S rRNAs.

Its function is as follows. This is one of the proteins that bind and probably mediate the attachment of the 5S RNA into the large ribosomal subunit, where it forms part of the central protuberance. The sequence is that of Large ribosomal subunit protein uL18 from Rhodopseudomonas palustris (strain BisA53).